Consider the following 94-residue polypeptide: Co-chaperonin GroES (94 aa).

It belongs to the GroES chaperonin family. In terms of assembly, heptamer of 7 subunits arranged in a ring. Interacts with the chaperonin GroEL.

Its subcellular location is the cytoplasm. Functionally, together with the chaperonin GroEL, plays an essential role in assisting protein folding. The GroEL-GroES system forms a nano-cage that allows encapsulation of the non-native substrate proteins and provides a physical environment optimized to promote and accelerate protein folding. GroES binds to the apical surface of the GroEL ring, thereby capping the opening of the GroEL channel. This Ehrlichia chaffeensis (strain ATCC CRL-10679 / Arkansas) protein is Co-chaperonin GroES.